Reading from the N-terminus, the 192-residue chain is NADH-quinone oxidoreductase subunit C (192 aa).

Residues 170–192 (LGGIPVEYKGATVPPPDERRQYA) form a disordered region.

The protein belongs to the complex I 30 kDa subunit family. As to quaternary structure, NDH-1 is composed of 14 different subunits. Subunits NuoB, C, D, E, F, and G constitute the peripheral sector of the complex.

It is found in the cell membrane. It catalyses the reaction a quinone + NADH + 5 H(+)(in) = a quinol + NAD(+) + 4 H(+)(out). Functionally, NDH-1 shuttles electrons from NADH, via FMN and iron-sulfur (Fe-S) centers, to quinones in the respiratory chain. The immediate electron acceptor for the enzyme in this species is believed to be a menaquinone. Couples the redox reaction to proton translocation (for every two electrons transferred, four hydrogen ions are translocated across the cytoplasmic membrane), and thus conserves the redox energy in a proton gradient. This Acidothermus cellulolyticus (strain ATCC 43068 / DSM 8971 / 11B) protein is NADH-quinone oxidoreductase subunit C.